Consider the following 8525-residue polypeptide: Nebulin (8525 aa).

The interval 34 to 70 (TTTTRTSDYEQSETSKPALAQPALAQPASAKPVERRK) is disordered. The segment covering 48–64 (SKPALAQPALAQPASAK) has biased composition (low complexity). 235 Nebulin repeats span residues 83 to 110 (TPYI…KTKG), 112 to 146 (PYAS…VAKT), 156 to 181 (DIEH…DTKD), 182 to 216 (KYLL…ADKS), 217 to 251 (LFYP…EQQA), 252 to 286 (QFTP…NKIK), 296 to 321 (EVAN…NMKD), 323 to 357 (IYFM…KNKG), 362 to 396 (NVLP…KTKA), 403 to 431 (ETPK…KDIL), 433 to 467 (HYVG…EDRG), 501 to 535 (KFTQ…SEKF), 536 to 570 (KCHI…KSKA), 572 to 606 (KFDI…KNKG), 610 to 644 (GVLS…KTKA), 680 to 714 (HYVG…EDKG), 748 to 782 (KFTA…GEKF), 783 to 817 (KCHI…KSKA), 819 to 853 (KFDI…KSKG), 857 to 891 (GALS…KSKT), 892 to 918 (IYTA…VDYK), 923 to 957 (SYSY…SWMK), 968 to 986 (EMEK…KYRQ), 992 to 1026 (KFTS…EIIH), 1027 to 1061 (KYNL…DLSK), 1063 to 1097 (GYDL…KAKG), 1101 to 1135 (GFQS…KTKS), 1136 to 1166 (KYNT…HSLH), 1167 to 1201 (HYTY…NWMK), 1212 to 1230 (DVEK…KYRQ), 1236 to 1270 (KFTS…DVKH), 1271 to 1305 (KYTM…DLIA), 1307 to 1341 (GNNV…KSKG), 1345 to 1379 (GFRS…NTKT), 1380 to 1407 (SYHT…NYKQ), 1411 to 1445 (HYTY…SFLK), 1456 to 1474 (EVEK…KYRQ), 1480 to 1514 (KFTS…KLKH), 1515 to 1549 (KYTI…KTIA), 1551 to 1585 (GYDL…KAKG), 1589 to 1623 (GFLS…ASKT), 1624 to 1654 (KYHT…QSYH), 1655 to 1689 (HYTL…NWMK), 1697 to 1725 (ESLE…KLKF), 1730 to 1758 (DTME…KDKT), 1759 to 1793 (TIHV…EEKK), 1795 to 1829 (GYDL…QAKG), 1833 to 1867 (GFRS…KSKT), 1868 to 1894 (SFHT…ANYR), 1899 to 1933 (TYNM…DFMK), 1949 to 1962 (KKAM…KYRQ), 1968 to 2002 (KYST…ADKT), 2003 to 2037 (KVHI…ESKK), 2039 to 2073 (GYDL…KGKG), 2077 to 2111 (GFRS…NTKT), 2112 to 2138 (SYHT…TNYK), 2143 to 2177 (KYIL…EWYK), 2188 to 2206 (EVEK…KYRQ), 2212 to 2246 (QFKK…KDKT), 2247 to 2281 (KIHV…EALK), 2283 to 2317 (GYDL…KQLG), 2321 to 2355 (GFRS…KWKT), 2356 to 2382 (KFSS…VDYK), 2387 to 2421 (QWTC…WLRG), 2436 to 2449 (KRAS…KYRQ), 2455 to 2489 (KFTS…KDKT), 2490 to 2524 (QIHI…ELKR), 2526 to 2560 (GYDL…KQLG), 2564 to 2598 (GARN…KWKT), 2599 to 2625 (KFSS…VDYK), 2630 to 2664 (QWTC…WLKG), 2679 to 2692 (KRAT…VYRQ), 2698 to 2732 (KFSS…KDKT), 2733 to 2767 (TVHI…EAKR), 2769 to 2803 (GYDM…KQLG), 2807 to 2841 (GARA…KWKT), 2842 to 2868 (KFSS…VDYK), 2873 to 2907 (QWTC…WMRG), 2917 to 2935 (DVEK…IYRQ), 2941 to 2975 (KFTS…KDKT), 2976 to 3010 (QIHI…EAKK), 3012 to 3046 (GYDL…KQLG), 3050 to 3084 (GARN…KWKT), 3085 to 3111 (KFSS…VDYK), 3116 to 3150 (EWTC…WLRG), 3158 to 3178 (SMDV…IYRQ), 3184 to 3218 (KFTS…KDKT), 3219 to 3253 (QIHI…EAKK), 3255 to 3289 (GYDL…KQLG), 3293 to 3327 (GARN…KWKT), 3328 to 3354 (KFSS…VDYK), 3359 to 3393 (EWTC…WLRG), 3401 to 3421 (SMDV…IYRQ), 3427 to 3461 (KFTS…KDKT), 3462 to 3496 (QVHI…EAKK), 3498 to 3532 (GYDL…KQLG), 3536 to 3570 (GARA…KYKT), 3571 to 3597 (RYSS…VDYK), 3602 to 3636 (EWIC…WMKG), 3643 to 3664 (DSLE…IYRQ), 3670 to 3704 (KFTS…NDKK), 3705 to 3739 (TIHV…ESKK), 3741 to 3775 (GYDL…KQLG), 3779 to 3813 (GARN…KWKT), 3814 to 3840 (KFSS…IDYK), 3845 to 3879 (EWTC…WLRG), 3889 to 3907 (EVEK…KYRQ), 3913 to 3947 (KFTC…ADKT), 3948 to 3982 (SIHV…ESKM), 3984 to 4018 (DYDL…KQKG), 4022 to 4056 (GAQS…KWKT), 4057 to 4083 (KFSS…IDYR), 4088 to 4122 (EWTC…WLRG), 4132 to 4149 (EMNR…RLYR), 4156 to 4190 (SFTS…KDKS), 4191 to 4225 (NITI…DAKQ), 4227 to 4261 (GYDI…KQLG), 4265 to 4299 (GFRT…KSKG), 4300 to 4326 (IHNT…IDYR), 4331 to 4365 (QWTC…WLKG), 4375 to 4392 (EVMR…RLYR), 4399 to 4433 (KFTS…KEKA), 4434 to 4468 (NVNV…DVKM), 4470 to 4504 (GYDL…KQKG), 4508 to 4542 (GCRS…DHKA), 4543 to 4569 (KISI…VDYR), 4574 to 4608 (HWSC…WLRG), 4618 to 4635 (EMNR…RLYR), 4642 to 4676 (SFTS…KDKS), 4677 to 4711 (NITI…DTKQ), 4713 to 4747 (GYDI…KQLG), 4751 to 4785 (GFRT…KSKG), 4786 to 4812 (IHNT…IDYR), 4817 to 4851 (QWTC…WLKG), 4861 to 4878 (EVMR…RLYR), 4885 to 4919 (KFTS…KEKA), 4920 to 4954 (NVNV…DVKM), 4956 to 4990 (GYDL…KQKG), 4994 to 5028 (GCRS…DHKA), 5029 to 5055 (KISI…VDYR), 5060 to 5094 (HWSC…WLRG), 5104 to 5121 (EMNR…RLYR), 5128 to 5162 (SFTS…KDKS), 5163 to 5197 (NITI…DTKQ), 5199 to 5233 (GYDI…KQLG), 5237 to 5271 (GFRT…KSKG), 5272 to 5298 (IHNT…IDYR), 5303 to 5337 (QWTC…WLKG), 5347 to 5364 (EVMR…RLYR), 5371 to 5405 (KFTS…KEKA), 5406 to 5440 (NVNV…DVKM), 5442 to 5476 (GYDL…KQKG), 5480 to 5514 (GCRS…DHKA), 5515 to 5541 (KISI…VDYR), 5546 to 5580 (RWSC…WLRG), 5588 to 5607 (SPEV…SVYR), 5614 to 5648 (KYTS…KDKT), 5649 to 5683 (SIHI…EMKA), 5690 to 5718 (DAIP…KQKG), 5722 to 5756 (GTLT…KWKA), 5757 to 5783 (KIQS…MDYR), 5788 to 5822 (QWTC…WLRG), 5829 to 5853 (DSVS…TKIE), 5856 to 5890 (NFTP…ATKS), 5893 to 5924 (TLTE…RQKA), 5926 to 5960 (GYIL…KQKG), 5964 to 5998 (GVPT…KTKA), 5999 to 6025 (KINI…IDYR), 6030 to 6064 (QWMC…WLRG), 6071 to 6099 (DSVD…ENYP), 6100 to 6134 (NFRS…KAKG), 6135 to 6169 (KYTF…GTKA), 6171 to 6205 (GYTL…KQKG), 6209 to 6243 (AGKV…DTKA), 6244 to 6274 (NVHI…HYFH), 6275 to 6309 (QWTS…WLKG), 6316 to 6344 (DTPQ…ENLQ), 6345 to 6379 (NYNL…QIKD), 6380 to 6414 (KYTT…RVKA), 6416 to 6450 (SYIL…KFKA), 6458 to 6488 (VDDD…KNKM), 6489 to 6515 (KIHI…IDYR), 6532 to 6554 (HVRK…WLKG), 6561 to 6589 (DTPE…KTRN), 6590 to 6624 (DYKL…HSVR), 6626 to 6660 (KVAP…TLPT), 6661 to 6695 (GYRL…HTKA), 6697 to 6731 (GYTL…KLKD), 6732 to 6766 (KIHT…KMQG), 6767 to 6801 (HMIS…VLKG), 6808 to 6836 (DTPD…KMRD), 6837 to 6871 (KYKV…KQKS), 6872 to 6906 (IFTS…KERP), 6907 to 6941 (HHHA…KMKD), 6942 to 6976 (KYTP…KTKG), 6977 to 7011 (KYHT…SQLG), 7012 to 7046 (IWRS…WLKG), 7053 to 7081 (DTPD…RTKS), 7082 to 7110 (DFKY…YKSS), 7125 to 7151 (PDML…KSKD), 7152 to 7186 (KFTS…KAKP), 7188 to 7222 (GYTT…RNKS), 7223 to 7257 (NCTI…ANKA), 7258 to 7292 (HWKW…FLKG), 7297 to 7327 (VTDD…KERG), 7328 to 7362 (TCHA…KHLA), 7365 to 7399 (SYTT…KEKG), 7402 to 7433 (NYSI…DAKE), 7436 to 7470 (HYTT…KEGS), 7479 to 7505 (PDIE…KEKG), 7514 to 7542 (DSQL…KLHK), 7543 to 7577 (PVTD…KSKG), 7578 to 7612 (HYHT…KERG), 7619 to 7647 (ETPT…ESIK), 7650 to 7684 (NLTG…ESIR), 7687 to 7721 (GLTE…LEVK), 7731 to 7759 (ETPD…MEKA), 7760 to 7794 (NFTS…KSMS), 7795 to 7829 (YYET…NSKG), 7830 to 7864 (KITV…PGTA), 7867 to 7888 (KTPE…KYKE), 7892 to 7921 (QGTP…KENL), 7930 to 7957 (TPEI…KGIP), 7961 to 7988 (TPEM…KGTP), 7992 to 8013 (TPEM…YKEN), 8016 to 8045 (KGIP…KENL), 8054 to 8075 (TPEM…YKEN), 8078 to 8112 (KGTP…KGTP), 8116 to 8143 (TPEM…KGTP), 8147 to 8168 (TPEM…YKEN), 8171 to 8205 (KATA…KATP), 8209 to 8232 (TPEM…ENMR), 8233 to 8267 (KATP…KQIQ), 8269 to 8303 (KAAY…KHKG), and 8304 to 8330 (CFTP…INYR). Residues 8313–8468 (ITERVKKNMQ…SIPSHPSTAG (156 aa)) are interaction with SVIL. Disordered regions lie at residues 8385-8422 (QAQR…LSTY) and 8439-8463 (TTEL…IPSH). Residues 8405–8419 (GEEKSEHSEAPDHHL) show a composition bias toward basic and acidic residues. Residues 8444–8459 (QQRSSSVATQQTTVSS) are compositionally biased toward low complexity. One can recognise an SH3 domain in the interval 8466–8525 (TAGKIFRAMYDYMAADADEVSFKDGDAIINVQAIDEGWMYGTVQRTGRTGMLPANYVEAI).

As to quaternary structure, monomer and homooligomer. Interacts with TTN/titin. Interacts with SVIL. Interacts (via nebulin repeats 160-164) with DES. As to expression, expressed in skeletal muscle (at protein level). Located in the thin filament of striated muscle.

It is found in the cytoplasm. Its subcellular location is the myofibril. The protein localises to the sarcomere. It localises to the cytoskeleton. Functionally, this giant muscle protein may be involved in maintaining the structural integrity of sarcomeres and the membrane system associated with the myofibrils. Binds and stabilize F-actin. This chain is Nebulin (NEB), found in Homo sapiens (Human).